Reading from the N-terminus, the 587-residue chain is Branchpoint-bridging protein (587 aa).

Residues 1–16 (MLNSRSVGSTGSNNTP) are compositionally biased toward polar residues. Disordered regions lie at residues 1-64 (MLNS…DGRG) and 121-142 (GDVVPHHRERSPSPPPQYDNHG). The segment covering 44-64 (DSYKSNSRMDHRPDGYHDGRG) has biased composition (basic and acidic residues). Residues Ser131 and Ser133 each carry the phosphoserine modification. Positions 191–271 (YVPVKDYPEI…DKINHAIKLI (81 aa)) constitute a KH domain. CCHC-type zinc fingers lie at residues 309-326 (QVCQNCGNVGHRRFDCPE) and 334-351 (IVCRHCGSIGHIARDCPV). Disordered regions lie at residues 375–490 (GGGS…PGTS) and 551–587 (IPGATAPPGAPGSYNTSESSNLNAPPGVSMPNGYSNR). The segment covering 379 to 399 (AISNGNGEPQKSIEFSESGAA) has biased composition (polar residues). Residues 410–454 (AAASTSVSSSTSSPAPWAKPASSAAPSNPAPWQQPAAPQSAPALS) are compositionally biased toward low complexity. Composition is skewed to polar residues over residues 465–483 (QPTQQSAVQPSNLVPSQNA) and 563–573 (SYNTSESSNLN).

This sequence belongs to the BBP/SF1 family. As to quaternary structure, U2AF large subunit (u2af59), U2AF small subunit (u2af23) and bpb1 interact to form a complex required for complex A formation.

The protein localises to the cytoplasm. It localises to the nucleus. In terms of biological role, necessary for the splicing of pre-mRNA. The BPB1(SF1)-u2af59-u2af23 complex has a role in the recognition of the branch site (5'-UACUAAC-3'), the pyrimidine tract and the 3'-splice site at the 3'-end of introns. The protein is Branchpoint-bridging protein (bpb1) of Schizosaccharomyces pombe (strain 972 / ATCC 24843) (Fission yeast).